A 1272-amino-acid polypeptide reads, in one-letter code: CST complex subunit CTC1 (1272 aa).

Belongs to the CTC1 family. As to quaternary structure, component of the CST complex, composed of CTC1, TEN1 and STN1. Interacts with POT1A.

Its subcellular location is the nucleus. It localises to the chromosome. The protein resides in the telomere. Component of the CST complex, a complex that binds to single-stranded DNA and is required to protect telomeres from DNA degradation. The CST complex binds single-stranded DNA with high affinity in a sequence-independent manner, while isolated subunits bind DNA with low affinity by themselves. Associates with enzymatically active telomerase. The protein is CST complex subunit CTC1 of Arabidopsis thaliana (Mouse-ear cress).